The following is a 671-amino-acid chain: DNA ligase (671 aa).

NAD(+) contacts are provided by residues 32-36 (DAEYD), 81-82 (SL), and Glu-113. Lys-115 functions as the N6-AMP-lysine intermediate in the catalytic mechanism. 4 residues coordinate NAD(+): Arg-136, Glu-173, Lys-290, and Lys-314. Zn(2+) contacts are provided by Cys-408, Cys-411, Cys-426, and Cys-432. The BRCT domain occupies 593-671 (EIDSPFAGKT…EAEMLRLLGS (79 aa)).

It belongs to the NAD-dependent DNA ligase family. LigA subfamily. The cofactor is Mg(2+). Requires Mn(2+) as cofactor.

The catalysed reaction is NAD(+) + (deoxyribonucleotide)n-3'-hydroxyl + 5'-phospho-(deoxyribonucleotide)m = (deoxyribonucleotide)n+m + AMP + beta-nicotinamide D-nucleotide.. DNA ligase that catalyzes the formation of phosphodiester linkages between 5'-phosphoryl and 3'-hydroxyl groups in double-stranded DNA using NAD as a coenzyme and as the energy source for the reaction. It is essential for DNA replication and repair of damaged DNA. This Escherichia coli O157:H7 protein is DNA ligase.